A 143-amino-acid polypeptide reads, in one-letter code: Transcriptional regulator MraZ (143 aa).

2 SpoVT-AbrB domains span residues 5 to 47 (TYTP…PRAA) and 76 to 119 (TDEQ…DAQA).

Belongs to the MraZ family. In terms of assembly, forms oligomers.

The protein localises to the cytoplasm. It is found in the nucleoid. This Mycobacterium bovis (strain ATCC BAA-935 / AF2122/97) protein is Transcriptional regulator MraZ.